The following is a 1882-amino-acid chain: uncharacterized protein (1882 aa).

A helical transmembrane segment spans residues 16–36 (FFLLFGIIFVLFSIIFLETSI). 4 disordered regions span residues 103–129 (DFGS…DVND), 220–306 (FPGD…ESET), 492–513 (VALA…VKDP), and 658–698 (QTDE…TKST). The span at 221-239 (PGDKGKGEDKKTTKKKSEI) shows a compositional bias: basic and acidic residues. Residues 240–249 (KQASSATTVL) show a composition bias toward polar residues. 3 stretches are compositionally biased toward basic and acidic residues: residues 259–275 (TDAK…KDSN), 284–294 (NKDKVWFKSDE), and 500–511 (DKQESSADDGVK). Residues 667–698 (AKTTQGTTDSLTQLADASSSSSSSSTGDTKST) show a composition bias toward low complexity. 4 consecutive transmembrane segments (helical) span residues 987 to 1007 (ASVV…ILLI), 1037 to 1057 (VFAG…AFLL), 1080 to 1100 (WISF…ISWI), and 1154 to 1174 (LFTY…AGTI). Disordered stretches follow at residues 1233 to 1253 (DQIQ…EHPY) and 1572 to 1598 (KDGQ…TSST). Residues 1234-1245 (QIQQQQQQQQQQ) show a composition bias toward low complexity. Over residues 1583-1594 (TSSGGGSCGGGS) the composition is skewed to gly residues. A run of 4 helical transmembrane segments spans residues 1759–1779 (FLLG…GISM), 1807–1827 (FFIP…AGLL), 1828–1848 (VGVQ…VFEF), and 1851–1871 (YMVG…YFWI).

Belongs to the ABC-4 integral membrane protein family.

The protein resides in the cell membrane. This is an uncharacterized protein from Mycoplasma pneumoniae (strain ATCC 29342 / M129 / Subtype 1) (Mycoplasmoides pneumoniae).